Here is a 334-residue protein sequence, read N- to C-terminus: Holliday junction branch migration complex subunit RuvB (334 aa).

The large ATPase domain (RuvB-L) stretch occupies residues 4-184 (ADRLIQPQIQ…FGIPLRLEFY (181 aa)). Residues R24, G65, K68, T69, T70, 131-133 (EDY), R174, Y184, and R221 contribute to the ATP site. T69 lines the Mg(2+) pocket. The small ATPAse domain (RuvB-S) stretch occupies residues 185–255 (NIKDLSTIVT…VAEHALDLLD (71 aa)). The segment at 258-334 (SEGFDYMDRK…YQHFELIKPE (77 aa)) is head domain (RuvB-H). DNA is bound by residues R294, R313, and R318.

It belongs to the RuvB family. Homohexamer. Forms an RuvA(8)-RuvB(12)-Holliday junction (HJ) complex. HJ DNA is sandwiched between 2 RuvA tetramers; dsDNA enters through RuvA and exits via RuvB. An RuvB hexamer assembles on each DNA strand where it exits the tetramer. Each RuvB hexamer is contacted by two RuvA subunits (via domain III) on 2 adjacent RuvB subunits; this complex drives branch migration. In the full resolvosome a probable DNA-RuvA(4)-RuvB(12)-RuvC(2) complex forms which resolves the HJ.

It is found in the cytoplasm. The catalysed reaction is ATP + H2O = ADP + phosphate + H(+). The RuvA-RuvB-RuvC complex processes Holliday junction (HJ) DNA during genetic recombination and DNA repair, while the RuvA-RuvB complex plays an important role in the rescue of blocked DNA replication forks via replication fork reversal (RFR). RuvA specifically binds to HJ cruciform DNA, conferring on it an open structure. The RuvB hexamer acts as an ATP-dependent pump, pulling dsDNA into and through the RuvAB complex. RuvB forms 2 homohexamers on either side of HJ DNA bound by 1 or 2 RuvA tetramers; 4 subunits per hexamer contact DNA at a time. Coordinated motions by a converter formed by DNA-disengaged RuvB subunits stimulates ATP hydrolysis and nucleotide exchange. Immobilization of the converter enables RuvB to convert the ATP-contained energy into a lever motion, pulling 2 nucleotides of DNA out of the RuvA tetramer per ATP hydrolyzed, thus driving DNA branch migration. The RuvB motors rotate together with the DNA substrate, which together with the progressing nucleotide cycle form the mechanistic basis for DNA recombination by continuous HJ branch migration. Branch migration allows RuvC to scan DNA until it finds its consensus sequence, where it cleaves and resolves cruciform DNA. The protein is Holliday junction branch migration complex subunit RuvB of Shewanella baltica (strain OS155 / ATCC BAA-1091).